The following is a 480-amino-acid chain: Radical SAM Nalpha-GlyT isomerase (480 aa).

Iron-sulfur cluster contacts are provided by C125, C129, and C132. A disordered region spans residues 457 to 480 (KIVEPTPPEEDGGERKIIPITQID).

The catalysed reaction is 5-N(alpha)-glycyl-dTMP in DNA + AH2 + S-adenosyl-L-methionine = 5-C(alpha)-glycyl-dTMP in DNA + 5'-deoxyadenosine + L-methionine + A + H(+). Functionally, isomerizes 5-N-alpha-glycinylthymidine (Nalpha-GlyT) into 5-Calpha-glycinylthymidine (Calpha-GlyT) as a step in the pathway leading to thymidine hypermodifications in the viral genome. As a final result of the pathway of hypermodification, 5-aminoethyl-2'-deoxyuridine (5-NedU) substitutes for about 30% of thymidines in the viral DNA. These modifications probably prevent degradation of viral genome by the host restriction-modification antiviral defense system. The protein is Radical SAM Nalpha-GlyT isomerase of Pseudomonas phage M6.